Reading from the N-terminus, the 183-residue chain is MTATAQQLEYLKNSIKSIQDYPKPGILFRDVTSLLEDPKAYALSIDLLVERYKNAGITKVVGTEARGFLFGAPVALGLGVGFVPVRKPGKLPRETISETYDLEYGTDQLEIHVDAIKPGDKVLVVDDLLATGGTIEATVKLIRRLGGEVADAAFIINLFDLGGEQRLEKQGITSYSLVPFPGH.

Belongs to the purine/pyrimidine phosphoribosyltransferase family. As to quaternary structure, homodimer.

It is found in the cytoplasm. The enzyme catalyses AMP + diphosphate = 5-phospho-alpha-D-ribose 1-diphosphate + adenine. Its pathway is purine metabolism; AMP biosynthesis via salvage pathway; AMP from adenine: step 1/1. Functionally, catalyzes a salvage reaction resulting in the formation of AMP, that is energically less costly than de novo synthesis. This chain is Adenine phosphoribosyltransferase, found in Escherichia coli (strain K12 / MC4100 / BW2952).